Consider the following 180-residue polypeptide: LDLR chaperone boca (180 aa).

Residues 1–18 (MQTRLVLLLLALTPLVLA) form the signal peptide. Residues 48 to 61 (QWEEDEEPLEDDEL) show a composition bias toward acidic residues. The segment at 48-78 (QWEEDEEPLEDDELPEHLRPQPKLDLSNLDS) is disordered. The tract at residues 93-166 (TLMTFVSVTG…QERCKGVTIE (74 aa)) is structured core. Positions 177–180 (KDEL) match the Prevents secretion from ER motif.

Belongs to the MESD family. Monomer. Interacts with Arrow and Yolkless.

Its subcellular location is the endoplasmic reticulum. Chaperone specifically assisting the folding of beta-propeller/EGF modules within the family of low-density lipoprotein receptors (LDLRs). Acts as a modulator of the Wg pathway, since some LDLRs are coreceptors for the canonical Wnt pathway. This chain is LDLR chaperone boca (boca), found in Drosophila melanogaster (Fruit fly).